Consider the following 83-residue polypeptide: NAD(P)H-quinone oxidoreductase subunit L (83 aa).

2 helical membrane-spanning segments follow: residues 18–38 and 53–73; these read ILAY…ALFF and LLVY…APFL.

This sequence belongs to the complex I NdhL subunit family. NDH-1 can be composed of about 15 different subunits; different subcomplexes with different compositions have been identified which probably have different functions.

It localises to the cellular thylakoid membrane. It catalyses the reaction a plastoquinone + NADH + (n+1) H(+)(in) = a plastoquinol + NAD(+) + n H(+)(out). The enzyme catalyses a plastoquinone + NADPH + (n+1) H(+)(in) = a plastoquinol + NADP(+) + n H(+)(out). Its function is as follows. NDH-1 shuttles electrons from an unknown electron donor, via FMN and iron-sulfur (Fe-S) centers, to quinones in the respiratory and/or the photosynthetic chain. The immediate electron acceptor for the enzyme in this species is believed to be plastoquinone. Couples the redox reaction to proton translocation, and thus conserves the redox energy in a proton gradient. Cyanobacterial NDH-1 also plays a role in inorganic carbon-concentration. The sequence is that of NAD(P)H-quinone oxidoreductase subunit L from Parasynechococcus marenigrum (strain WH8102).